The sequence spans 720 residues: Catalase-peroxidase (720 aa).

A cross-link (tryptophyl-tyrosyl-methioninium (Trp-Tyr) (with M-233)) is located at residues 82-207 (WHSAGTYRTF…LGNTVMGLIY (126 aa)). His83 acts as the Proton acceptor in catalysis. A cross-link (tryptophyl-tyrosyl-methioninium (Tyr-Met) (with W-82)) is located at residues 207 to 233 (YVNPEGPNGEPDLEGSAKNIRESFGKM). His248 contributes to the heme b binding site.

It belongs to the peroxidase family. Peroxidase/catalase subfamily. Homodimer or homotetramer. Heme b serves as cofactor. In terms of processing, formation of the three residue Trp-Tyr-Met cross-link is important for the catalase, but not the peroxidase activity of the enzyme.

It catalyses the reaction H2O2 + AH2 = A + 2 H2O. The catalysed reaction is 2 H2O2 = O2 + 2 H2O. In terms of biological role, bifunctional enzyme with both catalase and broad-spectrum peroxidase activity. The polypeptide is Catalase-peroxidase (Halobacterium salinarum (strain ATCC 29341 / DSM 671 / R1)).